Reading from the N-terminus, the 614-residue chain is MGLHAILLLLLLRISASAAASRPPLDTLGIPPQDEAYFRGGVIRCRDGSGRFARDKLNDDFCDCPDGTDEPGTSACPEGKFYCQNAGHSPITIFSSRVNDGICDCCDGSDEYDSNVTCKNTCWEAGKAARDKLKKKVATYKSGVVIRNQEIQKAKVAFAKDEAELAKLKGEEKILQGLVDKLTEQKKLIEKAEEEERLRKEKEEKRMKEEAEKQAADEKKASDASQEVDSQENHETVQEDESKVAEHHDGHATSHDNHTPESESSVEQHDPESQDDISIKAAPADESPPEETSAAPTKEQESTPADSEGLSREELGRLVASRWTGEKVDEVSKDDKNEHEAEHDMPEHSEETHEDESDVPESAEDSYAGYHSEVEDDRHKYDDEDFSHESDDEYVDDHDEHVASYKSDDDQKGDDHSDFTASGQASWLDKIQQTVQNVLRTFNFFKTPVDLSEASRVRKEYDDASSKLSKIQSRISTLTDKLKHDFGKEKEFYYFYDQCFESKEGKYVYKVCPFKKASQVEGHSTTSLGRWDKFEESYRVMQFSNGDRCWNGPDRSLKVRLRCGLNNELNGVDEPSRCEYVAVLSTPALCDEQKLKELEQKLKASSNQRDHDEL.

Positions 1-19 (MGLHAILLLLLLRISASAA) are cleaved as a signal peptide. N115 carries an N-linked (GlcNAc...) asparagine glycan. 3 stretches are compositionally biased toward basic and acidic residues: residues 194–222 (EEER…KKAS), 231–272 (QENH…HDPE), and 324–351 (TGEK…HSEE). The disordered stretch occupies residues 194 to 396 (EEERLRKEKE…SHESDDEYVD (203 aa)). The span at 352–364 (THEDESDVPESAE) shows a compositional bias: acidic residues. The span at 372–382 (SEVEDDRHKYD) shows a compositional bias: basic and acidic residues. A compositionally biased stretch (acidic residues) spans 383-396 (DEDFSHESDDEYVD). The region spanning 497–592 (DQCFESKEGK…VLSTPALCDE (96 aa)) is the MRH domain. Disulfide bonds link C499/C512, C549/C578, and C563/C590.

In terms of assembly, heterodimer of a catalytic alpha subunit and a beta subunit.

The protein localises to the endoplasmic reticulum. It functions in the pathway glycan metabolism; N-glycan metabolism. Functionally, regulatory subunit of glucosidase II. May be required for defense response elicited by pathogen-associated molecular patterns (PAMPs). The chain is Glucosidase 2 subunit beta from Oryza sativa subsp. japonica (Rice).